We begin with the raw amino-acid sequence, 364 residues long: Fructose-bisphosphate aldolase A (364 aa).

At tyrosine 5 the chain carries Phosphotyrosine. The residue at position 9 (threonine 9) is a Phosphothreonine. Serine 36 and serine 39 each carry phosphoserine. Lysine 42 is modified (N6-acetyllysine; alternate). Lysine 42 is covalently cross-linked (Glycyl lysine isopeptide (Lys-Gly) (interchain with G-Cter in SUMO1); alternate). Lysine 42 is covalently cross-linked (Glycyl lysine isopeptide (Lys-Gly) (interchain with G-Cter in SUMO2); alternate). Arginine 43 contacts beta-D-fructose 1,6-bisphosphate. Serine 46 is subject to Phosphoserine. The residue at position 99 (lysine 99) is an N6-(2-hydroxyisobutyryl)lysine. The residue at position 108 (lysine 108) is an N6-acetyllysine. Lysine 111 carries the N6-acetyllysine; alternate modification. At lysine 111 the chain carries N6-malonyllysine; alternate. Serine 132 carries the post-translational modification Phosphoserine. N6-(2-hydroxyisobutyryl)lysine is present on lysine 147. Glutamate 188 acts as the Proton acceptor in catalysis. Lysine 230 (schiff-base intermediate with dihydroxyacetone-P) is an active-site residue. Serine 272 bears the Phosphoserine mark. Residues 272-274 (SGG), serine 301, and arginine 304 contribute to the beta-D-fructose 1,6-bisphosphate site. Lysine 312 carries the post-translational modification N6-malonyllysine. Lysine 330 is modified (N6-acetyllysine).

It belongs to the class I fructose-bisphosphate aldolase family. As to quaternary structure, homotetramer. Interacts with SNX9 and WAS. Interacts with FBP2; the interaction blocks FBP2 inhibition by physiological concentrations of AMP and reduces inhibition by Ca(2+).

It localises to the cytoplasm. The protein resides in the myofibril. The protein localises to the sarcomere. It is found in the i band. Its subcellular location is the m line. It carries out the reaction beta-D-fructose 1,6-bisphosphate = D-glyceraldehyde 3-phosphate + dihydroxyacetone phosphate. It participates in carbohydrate degradation; glycolysis; D-glyceraldehyde 3-phosphate and glycerone phosphate from D-glucose: step 4/4. Its function is as follows. Catalyzes the reversible conversion of beta-D-fructose 1,6-bisphosphate (FBP) into two triose phosphate and plays a key role in glycolysis and gluconeogenesis. In addition, may also function as scaffolding protein. The polypeptide is Fructose-bisphosphate aldolase A (ALDOA) (Pan troglodytes (Chimpanzee)).